The primary structure comprises 537 residues: Carbamoyl phosphate synthase large chain, C-terminal section (537 aa).

The carbamoyl phosphate synthetic domain stretch occupies residues methionine 1–glycine 395. Positions arginine 122 to isoleucine 313 constitute an ATP-grasp domain. ATP contacts are provided by arginine 158, lysine 197, leucine 199, glutamate 204, glycine 229, valine 230, histidine 231, serine 232, glutamine 272, and glutamate 284. Residues glutamine 272, glutamate 284, and asparagine 286 each contribute to the Mg(2+) site. Residues glutamine 272, glutamate 284, and asparagine 286 each coordinate Mn(2+). The 142-residue stretch at tyrosine 396 to isoleucine 537 folds into the MGS-like domain. Residues tyrosine 396–isoleucine 537 are allosteric domain.

The protein belongs to the CarB family. As to quaternary structure, composed of two chains; the small (or glutamine) chain promotes the hydrolysis of glutamine to ammonia, which is used by the large (or ammonia) chain to synthesize carbamoyl phosphate. Tetramer of heterodimers (alpha,beta)4. Requires Mg(2+) as cofactor. Mn(2+) is required as a cofactor.

It carries out the reaction hydrogencarbonate + L-glutamine + 2 ATP + H2O = carbamoyl phosphate + L-glutamate + 2 ADP + phosphate + 2 H(+). The enzyme catalyses hydrogencarbonate + NH4(+) + 2 ATP = carbamoyl phosphate + 2 ADP + phosphate + 2 H(+). It participates in amino-acid biosynthesis; L-arginine biosynthesis; carbamoyl phosphate from bicarbonate: step 1/1. Its pathway is pyrimidine metabolism; UMP biosynthesis via de novo pathway; (S)-dihydroorotate from bicarbonate: step 1/3. Its function is as follows. Large subunit of the glutamine-dependent carbamoyl phosphate synthetase (CPSase). CPSase catalyzes the formation of carbamoyl phosphate from the ammonia moiety of glutamine, carbonate, and phosphate donated by ATP, constituting the first step of 2 biosynthetic pathways, one leading to arginine and/or urea and the other to pyrimidine nucleotides. The large subunit (synthetase) binds the substrates ammonia (free or transferred from glutamine from the small subunit), hydrogencarbonate and ATP and carries out an ATP-coupled ligase reaction, activating hydrogencarbonate by forming carboxy phosphate which reacts with ammonia to form carbamoyl phosphate. This Aquifex aeolicus (strain VF5) protein is Carbamoyl phosphate synthase large chain, C-terminal section (carB2).